We begin with the raw amino-acid sequence, 165 residues long: Lipoprotein signal peptidase (165 aa).

3 helical membrane passes run 12 to 32 (WLWVVVAVLIIDLGSKFLILQ), 70 to 90 (WFFAGIAVGICVVLAVLMYRS), and 102 to 122 (ALIIGGALGNLFDRLWHGFVV). Active-site residues include Asp123 and Asp141. The helical transmembrane segment at 137–157 (FNLADSAICIGAALIVLEGFL) threads the bilayer.

The protein belongs to the peptidase A8 family.

It is found in the cell inner membrane. The enzyme catalyses Release of signal peptides from bacterial membrane prolipoproteins. Hydrolyzes -Xaa-Yaa-Zaa-|-(S,diacylglyceryl)Cys-, in which Xaa is hydrophobic (preferably Leu), and Yaa (Ala or Ser) and Zaa (Gly or Ala) have small, neutral side chains.. The protein operates within protein modification; lipoprotein biosynthesis (signal peptide cleavage). Functionally, this protein specifically catalyzes the removal of signal peptides from prolipoproteins. In Klebsiella aerogenes (strain ATCC 13048 / DSM 30053 / CCUG 1429 / JCM 1235 / KCTC 2190 / NBRC 13534 / NCIMB 10102 / NCTC 10006 / CDC 819-56) (Enterobacter aerogenes), this protein is Lipoprotein signal peptidase.